The sequence spans 232 residues: Small ribosomal subunit protein uS3 (232 aa).

One can recognise a KH type-2 domain in the interval 39 to 107 (VRQYLTKALK…PAQINIAEVR (69 aa)).

This sequence belongs to the universal ribosomal protein uS3 family. As to quaternary structure, part of the 30S ribosomal subunit. Forms a tight complex with proteins S10 and S14.

In terms of biological role, binds the lower part of the 30S subunit head. Binds mRNA in the 70S ribosome, positioning it for translation. The chain is Small ribosomal subunit protein uS3 from Pseudoalteromonas atlantica (strain T6c / ATCC BAA-1087).